The sequence spans 661 residues: UvrABC system protein B (661 aa).

A Helicase ATP-binding domain is found at 25 to 182 (AGLSSKKRSQ…NDLINLQYER (158 aa)). 38 to 45 (GITGSGKT) provides a ligand contact to ATP. Residues 91–114 (YYDYYQPEAYIARTDTFIEKDSSI) carry the Beta-hairpin motif. The Helicase C-terminal domain maps to 430–592 (QIEDLISEIQ…IIPKTINRTI (163 aa)). The 36-residue stretch at 621–656 (KTHIDKLKKEMLKAASNLEFEQAAKLRDQLKTLEEA) folds into the UVR domain.

Belongs to the UvrB family. Forms a heterotetramer with UvrA during the search for lesions. Interacts with UvrC in an incision complex.

The protein localises to the cytoplasm. Functionally, the UvrABC repair system catalyzes the recognition and processing of DNA lesions. A damage recognition complex composed of 2 UvrA and 2 UvrB subunits scans DNA for abnormalities. Upon binding of the UvrA(2)B(2) complex to a putative damaged site, the DNA wraps around one UvrB monomer. DNA wrap is dependent on ATP binding by UvrB and probably causes local melting of the DNA helix, facilitating insertion of UvrB beta-hairpin between the DNA strands. Then UvrB probes one DNA strand for the presence of a lesion. If a lesion is found the UvrA subunits dissociate and the UvrB-DNA preincision complex is formed. This complex is subsequently bound by UvrC and the second UvrB is released. If no lesion is found, the DNA wraps around the other UvrB subunit that will check the other stand for damage. This chain is UvrABC system protein B, found in Rickettsia massiliae (strain Mtu5).